A 507-amino-acid polypeptide reads, in one-letter code: RNA-splicing ligase RtcB homolog (507 aa).

D121, C124, H229, H261, and H355 together coordinate Mn(2+). 228 to 232 (NHYGE) lines the GMP pocket. GMP-binding positions include 355–356 (HN), 404–407 (GGTM), S411, 430–433 (HGSG), and K506. H430 acts as the GMP-histidine intermediate in catalysis.

Belongs to the RtcB family. In terms of assembly, catalytic component of the tRNA-splicing ligase complex. Mn(2+) is required as a cofactor.

The enzyme catalyses a 3'-end 3'-phospho-ribonucleotide-RNA + a 5'-end dephospho-ribonucleoside-RNA + GTP = a ribonucleotidyl-ribonucleotide-RNA + GMP + diphosphate. It catalyses the reaction a 3'-end 2',3'-cyclophospho-ribonucleotide-RNA + a 5'-end dephospho-ribonucleoside-RNA + GTP + H2O = a ribonucleotidyl-ribonucleotide-RNA + GMP + diphosphate + H(+). Catalytic subunit of the tRNA-splicing ligase complex that acts by directly joining spliced tRNA halves to mature-sized tRNAs by incorporating the precursor-derived splice junction phosphate into the mature tRNA as a canonical 3',5'-phosphodiester. May act as an RNA ligase with broad substrate specificity, and may function toward other RNAs. In Theileria parva (East coast fever infection agent), this protein is RNA-splicing ligase RtcB homolog.